Here is a 160-residue protein sequence, read N- to C-terminus: MTAENGAQGAVSPSLNILAQYIKDLSFENPGAPRSLQGRENAPAININVNVNANPISGSDFDVVLTLNAEAKDGDKILFAAELVYGGVFRIAGFPQEHMLPVLFIECPRLLFPFARQIIADVTRNGGFPPLMIDPIDFSQMFAQRVAEEQAKAQVQAVPN.

It belongs to the SecB family. In terms of assembly, homotetramer, a dimer of dimers. One homotetramer interacts with 1 SecA dimer.

Its subcellular location is the cytoplasm. Its function is as follows. One of the proteins required for the normal export of preproteins out of the cell cytoplasm. It is a molecular chaperone that binds to a subset of precursor proteins, maintaining them in a translocation-competent state. It also specifically binds to its receptor SecA. The protein is Protein-export protein SecB of Agrobacterium fabrum (strain C58 / ATCC 33970) (Agrobacterium tumefaciens (strain C58)).